The sequence spans 233 residues: Glutathione S-transferase 2 (233 aa).

One can recognise a GST N-terminal domain in the interval Q17–T101. Glutathione contacts are provided by residues Y29, H58, V72, E85–C86, and H133. The GST C-terminal domain occupies T106–S233.

It belongs to the GST superfamily. Homodimer.

It carries out the reaction RX + glutathione = an S-substituted glutathione + a halide anion + H(+). In Saccharomyces cerevisiae (strain ATCC 204508 / S288c) (Baker's yeast), this protein is Glutathione S-transferase 2 (GTT2).